A 338-amino-acid polypeptide reads, in one-letter code: Stage V sporulation protein AD (338 aa).

In Bacillus subtilis (strain 168), this protein is Stage V sporulation protein AD (spoVAD).